Consider the following 429-residue polypeptide: Adenylosuccinate synthetase (429 aa).

GTP-binding positions include 12-18 (GDEGKGK) and 40-42 (GHT). D13 (proton acceptor) is an active-site residue. Mg(2+) contacts are provided by D13 and G40. IMP is bound by residues 13 to 16 (DEGK), 38 to 41 (NAGH), T128, R142, Q223, T238, and R302. H41 acts as the Proton donor in catalysis. Residue 298-304 (TTTGRPR) participates in substrate binding. Residues R304, 330 to 332 (SID), and 412 to 414 (SVG) each bind GTP.

This sequence belongs to the adenylosuccinate synthetase family. In terms of assembly, homodimer. Requires Mg(2+) as cofactor.

Its subcellular location is the cytoplasm. It catalyses the reaction IMP + L-aspartate + GTP = N(6)-(1,2-dicarboxyethyl)-AMP + GDP + phosphate + 2 H(+). Its pathway is purine metabolism; AMP biosynthesis via de novo pathway; AMP from IMP: step 1/2. In terms of biological role, plays an important role in the de novo pathway of purine nucleotide biosynthesis. Catalyzes the first committed step in the biosynthesis of AMP from IMP. This Bacillus cytotoxicus (strain DSM 22905 / CIP 110041 / 391-98 / NVH 391-98) protein is Adenylosuccinate synthetase.